Reading from the N-terminus, the 5148-residue chain is E3 ubiquitin-protein ligase RNF213 (5148 aa).

The span at 38–48 (DNTLVVSSTPE) shows a compositional bias: polar residues. Positions 38-341 (DNTLVVSSTP…QAAAPEPTSA (304 aa)) are disordered. Residues 69–78 (PGKELEKPEE) are compositionally biased toward basic and acidic residues. Over residues 101–113 (GTISSSEAPSSGL) the composition is skewed to polar residues. Residues 130-146 (PQNQAQQGGAASQPGHP) are compositionally biased toward low complexity. S196 carries the phosphoserine modification. Basic and acidic residues-rich tracts occupy residues 233-245 (SKGE…KKVP), 257-267 (AGKETGEDVRK), and 279-289 (KHGDQEAELKG). Residues 319–335 (AAAVKTQQAAAPQQAAA) show a composition bias toward low complexity. Residue K1128 forms a Glycyl lysine isopeptide (Lys-Gly) (interchain with G-Cter in SUMO2) linkage. Residues 1957-1962 (GVGKSL), E2060, A2114, D2116, and R2177 contribute to the ATP site. S2234 carries the phosphoserine modification. 2 residues coordinate ATP: K2460 and S2535. A coiled-coil region spans residues 3435-3465 (EEMEIETSQSKELAEEQMEVEDSEEMKKASD). Zn(2+) is bound by residues C3947, C3950, C3962, H3964, C3967, C3970, C3982, C3985, C4451, and H4455. An RING-type zinc finger spans residues 3947 to 3986 (CFICHGDAQDPVCLPCDHVYCLRCIQTWLIPGQMMCPYCL). The segment at 4429–4501 (MPEDLLVHAR…IRNNEDRTQT (73 aa)) adopts an RZ-type zinc-finger fold. The active-site Nucleophile; for E3 ubiquitin-lipopolysaccharide ligase activity is C4462. Zn(2+) contacts are provided by C4471 and C4474.

This sequence belongs to the AAA ATPase family. In terms of assembly, monomer. Interacts with UBE2L3/UBCH7; UBE2L3/UBCH7 is the most efficient ubiquitin-conjugating enzyme E2 for the ubiquitin ligase activity. Interacts with UBE2N/UBC13; promoting 'Lys-63'-linked ubiquitination of target proteins.

The protein resides in the cytoplasm. It is found in the cytosol. The protein localises to the lipid droplet. The enzyme catalyses S-ubiquitinyl-[E2 ubiquitin-conjugating enzyme]-L-cysteine + [acceptor protein]-L-lysine = [E2 ubiquitin-conjugating enzyme]-L-cysteine + N(6)-ubiquitinyl-[acceptor protein]-L-lysine.. It catalyses the reaction ATP + H2O = ADP + phosphate + H(+). Its pathway is protein modification; protein ubiquitination. Its function is as follows. Atypical E3 ubiquitin ligase that can catalyze ubiquitination of both proteins and lipids, and which is involved in various processes, such as lipid metabolism, angiogenesis and cell-autonomous immunity. Acts as a key immune sensor by catalyzing ubiquitination of the lipid A moiety of bacterial lipopolysaccharide (LPS) via its RZ-type zinc-finger: restricts the proliferation of cytosolic bacteria, such as Salmonella, by generating the bacterial ubiquitin coat through the ubiquitination of LPS. Also acts indirectly by mediating the recruitment of the LUBAC complex, which conjugates linear polyubiquitin chains. Ubiquitination of LPS triggers cell-autonomous immunity, such as antibacterial autophagy, leading to degradation of the microbial invader. Involved in lipid metabolism by regulating fat storage and lipid droplet formation; act by inhibiting the lipolytic process. Also regulates lipotoxicity by inhibiting desaturation of fatty acids. Also acts as an E3 ubiquitin-protein ligase via its RING-type zinc finger: mediates 'Lys-63'-linked ubiquitination of target proteins. Involved in the non-canonical Wnt signaling pathway in vascular development: acts by mediating ubiquitination and degradation of FLNA and NFATC2 downstream of RSPO3, leading to inhibit the non-canonical Wnt signaling pathway and promoting vessel regression. Also has ATPase activity; ATPase activity is required for ubiquitination of LPS. This is E3 ubiquitin-protein ligase RNF213 from Mus musculus (Mouse).